We begin with the raw amino-acid sequence, 198 residues long: MNNIFSKLRDFVGLNEQVEYEYYEEEADTDNYQNLYQQENPQPAPAEAAPNNRRWREPMTTMGDDVAAGTKSAMGNVIGMPGAINGISEVLVLEPRTFEEMPQAIQALRERKSVVLNLTIMDPDQAQRAVDFVAGGTYALDGHQERIGESIFLFTPSCVQVSTQGGVIHEVPQPPARPARPASTNPPAWGNETNRMAQ.

The tract at residues 170–198 (EVPQPPARPARPASTNPPAWGNETNRMAQ) is disordered. Positions 179–188 (ARPASTNPPA) are enriched in low complexity.

This sequence belongs to the SepF family. As to quaternary structure, homodimer. Interacts with FtsZ.

It localises to the cytoplasm. Functionally, cell division protein that is part of the divisome complex and is recruited early to the Z-ring. Probably stimulates Z-ring formation, perhaps through the cross-linking of FtsZ protofilaments. Its function overlaps with FtsA. The sequence is that of Cell division protein SepF from Nostoc sp. (strain PCC 7120 / SAG 25.82 / UTEX 2576).